The sequence spans 444 residues: Bifunctional enolase 2/transcriptional activator (444 aa).

The substrate site is built by histidine 163 and glutamate 172. Residue glutamate 215 is the Proton donor of the active site. Mg(2+) is bound by residues aspartate 250, glutamate 300, and aspartate 327. Substrate is bound by residues glutamate 300 and aspartate 327. Lysine 352 acts as the Proton acceptor in catalysis. Substrate contacts are provided by residues serine 379 to serine 382 and lysine 403.

Belongs to the enolase family. As to quaternary structure, homodimer. It depends on Mg(2+) as a cofactor.

Its subcellular location is the cytoplasm. The protein resides in the cytosol. It is found in the nucleus. The protein localises to the mitochondrion outer membrane. It carries out the reaction (2R)-2-phosphoglycerate = phosphoenolpyruvate + H2O. It participates in carbohydrate degradation; glycolysis; pyruvate from D-glyceraldehyde 3-phosphate: step 4/5. Its function is as follows. Multifunctional enzyme that acts as an enolase involved in the metabolism and as a positive regulator of cold-responsive gene transcription. Binds to the cis-element the gene promoter of STZ/ZAT10, a zinc finger transcriptional repressor. The polypeptide is Bifunctional enolase 2/transcriptional activator (ENO2) (Arabidopsis thaliana (Mouse-ear cress)).